The primary structure comprises 424 residues: Na(+)/H(+) antiporter NhaP (424 aa).

12 helical membrane-spanning segments follow: residues 3-23, 25-45, 66-86, 96-116, 130-152, 170-190, 200-220, 246-266, 296-316, 320-340, 358-378, and 384-404; these read DLVA…YRFI, LPPT…VQGL, FSEV…ALHV, WPIG…IGGL, FIYC…LGIL, LFND…LQLG, ILFV…GYGV, ALAA…GLII, ALLF…WLHV, FALG…AILV, ILVW…SLPL, and LILS…GLSI.

It belongs to the monovalent cation:proton antiporter 1 (CPA1) transporter (TC 2.A.36) family.

Its subcellular location is the cell inner membrane. Inhibited by amiloride. Its function is as follows. Na(+)/H(+) antiporter that extrudes sodium in exchange for external protons. Also has weak Li(+)/H(+) antiport activity. The polypeptide is Na(+)/H(+) antiporter NhaP (nhaP) (Pseudomonas aeruginosa (strain ATCC 15692 / DSM 22644 / CIP 104116 / JCM 14847 / LMG 12228 / 1C / PRS 101 / PAO1)).